The chain runs to 269 residues: MLLLDLMSSPSPQLLVAAAQQTLGMGKRRSPPQAICLHLAGEVLAVARGLKPAVLYDCNCAGASELQSYLEELKGLGFLTFGLHILEIGENSLIVSPEHVCQHLEQVLLGTIAFVDVSSCQRHPSVCSLDQLQDLKALVAEIITHLQGLQRDLSLAVSYSRLHSSDWNLCTVFGILLGYPVPYTFHLNQGDDNCLALTPLRVFTARISWLLGQPPILLYSFSVPESLFPGLRDILNTWEKDLRTRFRTQNDFADLSISSEIVTLPAVAL.

It belongs to the UPF0739 family.

The polypeptide is UPF0739 protein C1orf74 (C1orf74) (Homo sapiens (Human)).